A 161-amino-acid polypeptide reads, in one-letter code: Methylated-DNA--protein-cysteine methyltransferase (161 aa).

C128 functions as the Nucleophile; methyl group acceptor in the catalytic mechanism.

It belongs to the MGMT family.

The protein resides in the cytoplasm. It carries out the reaction a 6-O-methyl-2'-deoxyguanosine in DNA + L-cysteinyl-[protein] = S-methyl-L-cysteinyl-[protein] + a 2'-deoxyguanosine in DNA. It catalyses the reaction a 4-O-methyl-thymidine in DNA + L-cysteinyl-[protein] = a thymidine in DNA + S-methyl-L-cysteinyl-[protein]. Involved in the cellular defense against the biological effects of O6-methylguanine (O6-MeG) and O4-methylthymine (O4-MeT) in DNA. Repairs the methylated nucleobase in DNA by stoichiometrically transferring the methyl group to a cysteine residue in the enzyme. This is a suicide reaction: the enzyme is irreversibly inactivated. This chain is Methylated-DNA--protein-cysteine methyltransferase, found in Methanocaldococcus vulcanius (strain ATCC 700851 / DSM 12094 / M7) (Methanococcus vulcanius).